Reading from the N-terminus, the 635-residue chain is DNA-directed RNA polymerase subunit gamma (635 aa).

Residues cysteine 74, cysteine 76, cysteine 89, and cysteine 92 each coordinate Zn(2+). Mg(2+)-binding residues include aspartate 471, aspartate 473, and aspartate 475.

This sequence belongs to the RNA polymerase beta' chain family. RpoC1 subfamily. In cyanobacteria the RNAP catalytic core is composed of 2 alpha, 1 beta, 1 beta', 1 gamma and 1 omega subunit. When a sigma factor is associated with the core the holoenzyme is formed, which can initiate transcription. Mg(2+) is required as a cofactor. Zn(2+) serves as cofactor.

It catalyses the reaction RNA(n) + a ribonucleoside 5'-triphosphate = RNA(n+1) + diphosphate. DNA-dependent RNA polymerase catalyzes the transcription of DNA into RNA using the four ribonucleoside triphosphates as substrates. This Prochlorococcus marinus (strain NATL1A) protein is DNA-directed RNA polymerase subunit gamma.